Reading from the N-terminus, the 125-residue chain is Small ribosomal subunit protein uS13 (125 aa).

This sequence belongs to the universal ribosomal protein uS13 family. In terms of assembly, part of the 30S ribosomal subunit. Forms a loose heterodimer with protein S19. Forms two bridges to the 50S subunit in the 70S ribosome.

Functionally, located at the top of the head of the 30S subunit, it contacts several helices of the 16S rRNA. In the 70S ribosome it contacts the 23S rRNA (bridge B1a) and protein L5 of the 50S subunit (bridge B1b), connecting the 2 subunits; these bridges are implicated in subunit movement. Contacts the tRNAs in the A and P-sites. The polypeptide is Small ribosomal subunit protein uS13 (Rickettsia africae (strain ESF-5)).